A 180-amino-acid polypeptide reads, in one-letter code: Translation initiation factor IF-3 (180 aa).

It belongs to the IF-3 family. Monomer.

It localises to the cytoplasm. IF-3 binds to the 30S ribosomal subunit and shifts the equilibrium between 70S ribosomes and their 50S and 30S subunits in favor of the free subunits, thus enhancing the availability of 30S subunits on which protein synthesis initiation begins. This chain is Translation initiation factor IF-3, found in Klebsiella pneumoniae.